We begin with the raw amino-acid sequence, 37 residues long: MKVRASVKKICRNCKIVKRSGVVRVICIEPKHKQRQG.

Belongs to the bacterial ribosomal protein bL36 family.

This is Large ribosomal subunit protein bL36 from Shewanella frigidimarina (strain NCIMB 400).